The chain runs to 319 residues: Coproporphyrin III ferrochelatase 2 (319 aa).

Fe-coproporphyrin III-binding positions include Y13, R30, 46–47 (RY), S54, and Y125. Fe(2+)-binding residues include H181 and E262.

Belongs to the ferrochelatase family.

The protein localises to the cytoplasm. It carries out the reaction Fe-coproporphyrin III + 2 H(+) = coproporphyrin III + Fe(2+). The protein operates within porphyrin-containing compound metabolism; protoheme biosynthesis. Functionally, involved in coproporphyrin-dependent heme b biosynthesis. Catalyzes the insertion of ferrous iron into coproporphyrin III to form Fe-coproporphyrin III. The sequence is that of Coproporphyrin III ferrochelatase 2 from Bacillus cereus (strain ATCC 14579 / DSM 31 / CCUG 7414 / JCM 2152 / NBRC 15305 / NCIMB 9373 / NCTC 2599 / NRRL B-3711).